We begin with the raw amino-acid sequence, 488 residues long: Catalase (488 aa).

A disordered region spans residues 1 to 24; that stretch reads MTDRRNLTTNQGVPIGDNQNSMTA. A compositionally biased stretch (polar residues) spans 7–23; the sequence is LTTNQGVPIGDNQNSMT. Catalysis depends on residues His-55 and Asn-128. Tyr-338 is a binding site for heme.

This sequence belongs to the catalase family. It depends on heme as a cofactor.

It localises to the cytoplasm. The enzyme catalyses 2 H2O2 = O2 + 2 H2O. Its function is as follows. Decomposes hydrogen peroxide into water and oxygen; serves to protect cells from the toxic effects of hydrogen peroxide. This Listeria seeligeri protein is Catalase (kat).